The sequence spans 20 residues: Cicerin (20 aa).

Residues 1–20 form a disordered region; the sequence is ARCENFADSYRQPPISSSQT.

Its function is as follows. Has antifungal activity against B.cinerea, F.oxysporum and M.arachidicola. Inhibits cell-free translation in rabbit reticulocyte lysate system. This Cicer arietinum (Chickpea) protein is Cicerin.